Consider the following 289-residue polypeptide: tRNA acetyltransferase TAN1 (289 aa).

Basic and acidic residues predominate over residues 1 to 10 (MGEKRNRNGK). Disordered regions lie at residues 1–31 (MGEK…DPGT) and 64–83 (DIKE…LSIE). Position 72 is a phosphoserine (Ser72). The THUMP domain occupies 146–259 (ADPKNMVKRT…KSNIGMCVVD (114 aa)).

The protein resides in the cytoplasm. It localises to the nucleus. Functionally, probable tRNA acetyltransferase required for the formation of the modified nucleoside N(4)-acetylcytidine in serine and leucine tRNAs. Binds RNA. The chain is tRNA acetyltransferase TAN1 (TAN1) from Saccharomyces cerevisiae (strain ATCC 204508 / S288c) (Baker's yeast).